Reading from the N-terminus, the 420-residue chain is Phytoene synthase 1, chloroplastic (420 aa).

A chloroplast-targeting transit peptide spans M1–Y70.

The protein belongs to the phytoene/squalene synthase family. In terms of tissue distribution, expressed in leaves. Highly expressed in developing leaves. Expressed at low levels in roots.

Its subcellular location is the plastid. It localises to the chloroplast membrane. The protein localises to the chloroplast. It is found in the plastoglobule. The catalysed reaction is 2 (2E,6E,10E)-geranylgeranyl diphosphate = 15-cis-phytoene + 2 diphosphate. Catalyzes the conversion of geranylgeranyl diphosphate to phytoene. Mediates the first committed step in carotenoid biosynthesis. The protein is Phytoene synthase 1, chloroplastic of Oryza sativa subsp. japonica (Rice).